The chain runs to 246 residues: Mast cell protease 4 (246 aa).

The signal sequence occupies residues 1–18; sequence MQALLFLMALLLPSGAGA. A propeptide spans 19-20 (activation peptide); that stretch reads EE. The Peptidase S1 domain maps to 21–244; the sequence is IIGGVESRPH…YVPWINRVIK (224 aa). A disulfide bridge connects residues Cys-50 and Cys-66. Catalysis depends on charge relay system residues His-65 and Asp-109. Intrachain disulfides connect Cys-143-Cys-208 and Cys-174-Cys-187. Ser-202 acts as the Charge relay system in catalysis.

The protein belongs to the peptidase S1 family. Granzyme subfamily. Monomer. Interacts with iripin-2, a serine protease inhibitor from Ixodes ricinus saliva. As to expression, submucosal mast cells. In femoral muscle, detected in myocytes but not in mast cells.

Completely inhibited by serine protease inhibitors such as chymostatin, diisopropylfluorophosphate and phenylmethylsulfonyl fluoride, but not by p-tosyl-L-phenylalanine chloromethyl ketone, p-tosyl-L-lysine chloromethyl ketone, pepstatin, E-64, EDTA or o-phenanthroline. Also inhibited by lima bean trypsin inhibitor, soy bean trypsin inhibitor and human plasma alpha1-antichymotrypsin. Functionally, has chymotrypsin-like activity. Hydrolyzes the amide bonds of synthetic substrates having Tyr and Phe residues at the P1 position. Preferentially hydrolyzes the 'Tyr-4-|-Ile-5' bond of angiotensin I and the 'Phe-20-|-Ala-21' bond of amyloid beta-protein, and is less active towards the 'Phe-8-|-His-9' bond of angiotensin I and the 'Phe-4-|-Ala-5' and 'Tyr-10-|-Glu-11' bonds of amyloid beta-protein. Involved in thrombin regulation and fibronectin processing. In Mus musculus (Mouse), this protein is Mast cell protease 4 (Mcpt4).